A 143-amino-acid polypeptide reads, in one-letter code: NADH-quinone oxidoreductase subunit A (143 aa).

The next 3 membrane-spanning stretches (helical) occupy residues 8–28 (FGNVFVFFLLGVVFVAGGYLT), 63–83 (FYVVALIFIIFDVEVVFLFPW), and 93–113 (FALVEALVFAGILILGLVYAW).

Belongs to the complex I subunit 3 family. NDH-1 is composed of 14 different subunits. Subunits NuoA, H, J, K, L, M, N constitute the membrane sector of the complex.

The protein localises to the cell inner membrane. It catalyses the reaction a quinone + NADH + 5 H(+)(in) = a quinol + NAD(+) + 4 H(+)(out). NDH-1 shuttles electrons from NADH, via FMN and iron-sulfur (Fe-S) centers, to quinones in the respiratory chain. The immediate electron acceptor for the enzyme in this species is believed to be a menaquinone. Couples the redox reaction to proton translocation (for every two electrons transferred, four hydrogen ions are translocated across the cytoplasmic membrane), and thus conserves the redox energy in a proton gradient. In Chlorobium phaeovibrioides (strain DSM 265 / 1930) (Prosthecochloris vibrioformis (strain DSM 265)), this protein is NADH-quinone oxidoreductase subunit A.